The primary structure comprises 114 residues: MLNIYLKSKIHMAKITRKEVYYEGSIEVDEELMEKAGISEGEVVLVVNVNNAARFVTYVIKGKRGSREINLYGAAARLGEEGDRVIIMAFTFSDKPVKAKTIVLNEKNEIIQEK.

Residue Ser-25 is the Schiff-base intermediate with substrate; via pyruvic acid of the active site. Ser-25 is subject to Pyruvic acid (Ser). Residue Thr-57 coordinates substrate. Tyr-58 serves as the catalytic Proton donor. A substrate-binding site is contributed by 73-75; that stretch reads GAA.

It belongs to the PanD family. As to quaternary structure, heterooctamer of four alpha and four beta subunits. Requires pyruvate as cofactor. Post-translationally, is synthesized initially as an inactive proenzyme, which is activated by self-cleavage at a specific serine bond to produce a beta-subunit with a hydroxyl group at its C-terminus and an alpha-subunit with a pyruvoyl group at its N-terminus.

The protein localises to the cytoplasm. It catalyses the reaction L-aspartate + H(+) = beta-alanine + CO2. It functions in the pathway cofactor biosynthesis; (R)-pantothenate biosynthesis; beta-alanine from L-aspartate: step 1/1. Functionally, catalyzes the pyruvoyl-dependent decarboxylation of aspartate to produce beta-alanine. The protein is Aspartate 1-decarboxylase of Thermotoga petrophila (strain ATCC BAA-488 / DSM 13995 / JCM 10881 / RKU-1).